Consider the following 951-residue polypeptide: Glycine dehydrogenase (decarboxylating) 1 (951 aa).

Residue K703 is modified to N6-(pyridoxal phosphate)lysine.

It belongs to the GcvP family. The glycine cleavage system is composed of four proteins: P, T, L and H. Pyridoxal 5'-phosphate serves as cofactor.

The enzyme catalyses N(6)-[(R)-lipoyl]-L-lysyl-[glycine-cleavage complex H protein] + glycine + H(+) = N(6)-[(R)-S(8)-aminomethyldihydrolipoyl]-L-lysyl-[glycine-cleavage complex H protein] + CO2. In terms of biological role, the glycine cleavage system catalyzes the degradation of glycine. The P protein binds the alpha-amino group of glycine through its pyridoxal phosphate cofactor; CO(2) is released and the remaining methylamine moiety is then transferred to the lipoamide cofactor of the H protein. This chain is Glycine dehydrogenase (decarboxylating) 1, found in Pseudomonas fluorescens (strain ATCC BAA-477 / NRRL B-23932 / Pf-5).